Reading from the N-terminus, the 289-residue chain is Pseudouridine-5'-phosphate glycosidase (289 aa).

The Proton donor role is filled by Glu10. Positions 71 and 91 each coordinate substrate. Asp121 serves as a coordination point for Mn(2+). Residue 123–125 (SQD) coordinates substrate. Residue Lys142 is the Nucleophile of the active site.

This sequence belongs to the pseudouridine-5'-phosphate glycosidase family. Homotrimer. Mn(2+) serves as cofactor.

It catalyses the reaction D-ribose 5-phosphate + uracil = psi-UMP + H2O. Its function is as follows. Catalyzes the reversible cleavage of pseudouridine 5'-phosphate (PsiMP) to ribose 5-phosphate and uracil. Functions biologically in the cleavage direction, as part of a pseudouridine degradation pathway. The chain is Pseudouridine-5'-phosphate glycosidase from Kosmotoga olearia (strain ATCC BAA-1733 / DSM 21960 / TBF 19.5.1).